The following is a 215-amino-acid chain: Ran-specific GTPase-activating protein 1 (215 aa).

Composition is skewed to basic and acidic residues over residues 1 to 18 (MSAE…EEQK) and 26 to 35 (VASKQTEEAK). The disordered stretch occupies residues 1 to 78 (MSAEQEKKTQ…ASPEVHFEPI (78 aa)). Residue serine 70 is modified to Phosphoserine. Positions 74–210 (HFEPIVKLSA…FEKYQEENAK (137 aa)) constitute a RanBD1 domain.

Belongs to the RANBP1 family.

It localises to the cytoplasm. Stimulates the GTPase activity in the presence of RNA1. May potentiate the action of RanGAP1 (RNA1), thus playing the role of a negative regulator. This Schizosaccharomyces pombe (strain 972 / ATCC 24843) (Fission yeast) protein is Ran-specific GTPase-activating protein 1 (sbp1).